The sequence spans 172 residues: Large ribosomal subunit protein uL10 (172 aa).

It belongs to the universal ribosomal protein uL10 family. In terms of assembly, part of the ribosomal stalk of the 50S ribosomal subunit. The N-terminus interacts with L11 and the large rRNA to form the base of the stalk. The C-terminus forms an elongated spine to which L12 dimers bind in a sequential fashion forming a multimeric L10(L12)X complex.

Forms part of the ribosomal stalk, playing a central role in the interaction of the ribosome with GTP-bound translation factors. In Chlorobium phaeobacteroides (strain DSM 266 / SMG 266 / 2430), this protein is Large ribosomal subunit protein uL10.